Consider the following 372-residue polypeptide: Glutamate 5-kinase (372 aa).

Position 14 (K14) interacts with ATP. S54, D141, and N153 together coordinate substrate. Residue T173 to D174 coordinates ATP. Residues R280–S358 enclose the PUA domain.

It belongs to the glutamate 5-kinase family.

Its subcellular location is the cytoplasm. It catalyses the reaction L-glutamate + ATP = L-glutamyl 5-phosphate + ADP. Its pathway is amino-acid biosynthesis; L-proline biosynthesis; L-glutamate 5-semialdehyde from L-glutamate: step 1/2. In terms of biological role, catalyzes the transfer of a phosphate group to glutamate to form L-glutamate 5-phosphate. The polypeptide is Glutamate 5-kinase (Pseudomonas putida (strain GB-1)).